The chain runs to 92 residues: Acylphosphatase (92 aa).

The region spanning 7–92 is the Acylphosphatase-like domain; sequence KTRCTISGRV…DPAPAEFSVG (86 aa). Catalysis depends on residues arginine 22 and asparagine 40.

This sequence belongs to the acylphosphatase family.

It catalyses the reaction an acyl phosphate + H2O = a carboxylate + phosphate + H(+). The chain is Acylphosphatase (acyP) from Halorhodospira halophila (strain DSM 244 / SL1) (Ectothiorhodospira halophila (strain DSM 244 / SL1)).